A 511-amino-acid polypeptide reads, in one-letter code: Cytochrome P450 77A2 (511 aa).

C456 is a binding site for heme.

This sequence belongs to the cytochrome P450 family. Requires heme as cofactor.

The sequence is that of Cytochrome P450 77A2 (CYP77A2) from Solanum melongena (Eggplant).